The following is a 235-amino-acid chain: Biosynthetic peptidoglycan transglycosylase (235 aa).

The helical transmembrane segment at 12 to 34 (GLGKLLLAALLSTIVSVALLRFI) threads the bilayer.

It belongs to the glycosyltransferase 51 family.

The protein resides in the cell inner membrane. It catalyses the reaction [GlcNAc-(1-&gt;4)-Mur2Ac(oyl-L-Ala-gamma-D-Glu-L-Lys-D-Ala-D-Ala)](n)-di-trans,octa-cis-undecaprenyl diphosphate + beta-D-GlcNAc-(1-&gt;4)-Mur2Ac(oyl-L-Ala-gamma-D-Glu-L-Lys-D-Ala-D-Ala)-di-trans,octa-cis-undecaprenyl diphosphate = [GlcNAc-(1-&gt;4)-Mur2Ac(oyl-L-Ala-gamma-D-Glu-L-Lys-D-Ala-D-Ala)](n+1)-di-trans,octa-cis-undecaprenyl diphosphate + di-trans,octa-cis-undecaprenyl diphosphate + H(+). It participates in cell wall biogenesis; peptidoglycan biosynthesis. In terms of biological role, peptidoglycan polymerase that catalyzes glycan chain elongation from lipid-linked precursors. This chain is Biosynthetic peptidoglycan transglycosylase, found in Aeromonas hydrophila subsp. hydrophila (strain ATCC 7966 / DSM 30187 / BCRC 13018 / CCUG 14551 / JCM 1027 / KCTC 2358 / NCIMB 9240 / NCTC 8049).